The following is a 178-amino-acid chain: Protein GrpE (178 aa).

Pro residues predominate over residues 1–11 (MSENQNPPPSP). Residues 1 to 23 (MSENQNPPPSPEEIEAAMSANAA) form a disordered region.

The protein belongs to the GrpE family. Homodimer.

Its subcellular location is the cytoplasm. Its function is as follows. Participates actively in the response to hyperosmotic and heat shock by preventing the aggregation of stress-denatured proteins, in association with DnaK and GrpE. It is the nucleotide exchange factor for DnaK and may function as a thermosensor. Unfolded proteins bind initially to DnaJ; upon interaction with the DnaJ-bound protein, DnaK hydrolyzes its bound ATP, resulting in the formation of a stable complex. GrpE releases ADP from DnaK; ATP binding to DnaK triggers the release of the substrate protein, thus completing the reaction cycle. Several rounds of ATP-dependent interactions between DnaJ, DnaK and GrpE are required for fully efficient folding. The chain is Protein GrpE from Acidovorax sp. (strain JS42).